The chain runs to 305 residues: Mitochondrial distribution and morphology protein 12 (305 aa).

An SMP-LTD domain is found at methionine 1–threonine 236. The segment at leucine 233–glutamate 305 is disordered. Residues phenylalanine 235–arginine 248 show a composition bias toward acidic residues. Basic and acidic residues predominate over residues asparagine 258 to threonine 269. Polar residues predominate over residues glutamate 279–glutamate 305.

This sequence belongs to the MDM12 family. Component of the ER-mitochondria encounter structure (ERMES) or MDM complex, composed of MMM1, MDM10, MDM12 and MDM34. An MMM1 homodimer associates with one molecule of MDM12 on each side in a pairwise head-to-tail manner, and the SMP-LTD domains of MMM1 and MDM12 generate a continuous hydrophobic tunnel for phospholipid trafficking.

Its subcellular location is the mitochondrion outer membrane. The protein resides in the endoplasmic reticulum membrane. Its function is as follows. Component of the ERMES/MDM complex, which serves as a molecular tether to connect the endoplasmic reticulum (ER) and mitochondria. Components of this complex are involved in the control of mitochondrial shape and protein biogenesis, and function in nonvesicular lipid trafficking between the ER and mitochondria. MDM12 is required for the interaction of the ER-resident membrane protein MMM1 and the outer mitochondrial membrane-resident beta-barrel protein MDM10. The MDM12-MMM1 subcomplex functions in the major beta-barrel assembly pathway that is responsible for biogenesis of all mitochondrial outer membrane beta-barrel proteins, and acts in a late step after the SAM complex. The MDM10-MDM12-MMM1 subcomplex further acts in the TOM40-specific pathway after the action of the MDM12-MMM1 complex. Essential for establishing and maintaining the structure of mitochondria and maintenance of mtDNA nucleoids. This is Mitochondrial distribution and morphology protein 12 from Kluyveromyces lactis (strain ATCC 8585 / CBS 2359 / DSM 70799 / NBRC 1267 / NRRL Y-1140 / WM37) (Yeast).